The chain runs to 172 residues: 6,7-dimethyl-8-ribityllumazine synthase (172 aa).

Residues F22 and 56-58 (AFE) contribute to the 5-amino-6-(D-ribitylamino)uracil site. 78 to 79 (LG) contributes to the (2S)-2-hydroxy-3-oxobutyl phosphate binding site. Residue 80–82 (AII) coordinates 5-amino-6-(D-ribitylamino)uracil. The active-site Proton donor is H88. F113 provides a ligand contact to 5-amino-6-(D-ribitylamino)uracil. (2S)-2-hydroxy-3-oxobutyl phosphate is bound at residue R127.

This sequence belongs to the DMRL synthase family.

It carries out the reaction (2S)-2-hydroxy-3-oxobutyl phosphate + 5-amino-6-(D-ribitylamino)uracil = 6,7-dimethyl-8-(1-D-ribityl)lumazine + phosphate + 2 H2O + H(+). It participates in cofactor biosynthesis; riboflavin biosynthesis; riboflavin from 2-hydroxy-3-oxobutyl phosphate and 5-amino-6-(D-ribitylamino)uracil: step 1/2. Functionally, catalyzes the formation of 6,7-dimethyl-8-ribityllumazine by condensation of 5-amino-6-(D-ribitylamino)uracil with 3,4-dihydroxy-2-butanone 4-phosphate. This is the penultimate step in the biosynthesis of riboflavin. This chain is 6,7-dimethyl-8-ribityllumazine synthase, found in Protochlamydia amoebophila (strain UWE25).